Consider the following 430-residue polypeptide: MTSVVVVGTQWGDEGKGKITDFLSADAEVIARYQGGDNAGHTIVIDNKKFKLHLIPSGIFFKEKISVIGNGVVVNPKSLVKELAYLHGEGVTTDNLRISDRAHVILPYHIKLDQLQEDAKGDNKIGTTIKGIGPAYMDKAARVGIRIADLLDREVFAERLKINLAEKNRLFEKMYDSTPLEFDDIFEEYYEYGQQIKQYVTDTSVILNDALDAGKRVLFEGAQGVMLDIDQGTYPFVTSSNPVAGGVTIGSGVGPSKINKVVGVCKAYTSRVGDGPFPTELFDEVGDRIREIGKEYGTTTGRPRRVGWFDSVVMRHSRRVSGITNLSLNSIDVLSGLDTVKICVAYDLDGKRIDYYPASLEQLKRCKPIYEELPGWSEDITACRSLDDLPENARNYVRRVGELVGVRISTFSVGPGREQTNILESVWSNI.

GTP-binding positions include 12 to 18 (GDEGKGK) and 40 to 42 (GHT). The active-site Proton acceptor is D13. The Mg(2+) site is built by D13 and G40. IMP is bound by residues 13 to 16 (DEGK), 38 to 41 (NAGH), T128, R142, Q223, T238, and R302. H41 functions as the Proton donor in the catalytic mechanism. Position 298 to 304 (298 to 304 (TTTGRPR)) interacts with substrate. Residues R304, 330–332 (SID), and 412–414 (SVG) each bind GTP.

Belongs to the adenylosuccinate synthetase family. As to quaternary structure, homodimer. It depends on Mg(2+) as a cofactor.

It is found in the cytoplasm. It catalyses the reaction IMP + L-aspartate + GTP = N(6)-(1,2-dicarboxyethyl)-AMP + GDP + phosphate + 2 H(+). The protein operates within purine metabolism; AMP biosynthesis via de novo pathway; AMP from IMP: step 1/2. Functionally, plays an important role in the de novo pathway of purine nucleotide biosynthesis. Catalyzes the first committed step in the biosynthesis of AMP from IMP. In Streptococcus agalactiae serotype III (strain NEM316), this protein is Adenylosuccinate synthetase.